The sequence spans 366 residues: Galactoside alpha-(1,2)-fucosyltransferase 1 (366 aa).

Over 1 to 8 (MWPLSHRH) the chain is Cytoplasmic. Residues 9 to 25 (LCLAFLLVCVLSAISFF) form a helical; Signal-anchor for type II membrane protein membrane-spanning segment. Topologically, residues 26–366 (LHIHQDSFPH…LSPLWTLAEP (341 aa)) are lumenal. N-linked (GlcNAc...) asparagine glycans are attached at residues asparagine 66, asparagine 302, and asparagine 328.

Belongs to the glycosyltransferase 11 family.

It localises to the golgi apparatus. The protein resides in the golgi stack membrane. The catalysed reaction is a beta-D-galactosyl-(1-&gt;4)-N-acetyl-beta-D-glucosaminyl derivative + GDP-beta-L-fucose = an alpha-L-Fuc-(1-&gt;2)-beta-D-Gal-(1-&gt;4)-beta-D-GlcNAc derivative + GDP + H(+). It catalyses the reaction a ganglioside GA1 + GDP-beta-L-fucose = a ganglioside Fuc-GA1 + GDP + H(+). The enzyme catalyses a beta-D-Gal-(1-&gt;3)-beta-D-GlcNAc-(1-&gt;3)-beta-D-Gal-(1-&gt;4)-beta-D-Glc-(1&lt;-&gt;1')-Cer(d18:1(4E)) + GDP-beta-L-fucose = alpha-L-fucosyl-(1-&gt;2)- beta-D-galactosyl-(1-&gt;3)-N-acetyl-beta-D-glucosaminyl-(1-&gt;3)-beta-D-galactosyl-(1-&gt;4)-beta-D-glucosyl-(1&lt;-&gt;1')-N-acylsphing-4-enine + GDP + H(+). It carries out the reaction a neolactoside nLc4Cer(d18:1(4E)) + GDP-beta-L-fucose = a neolactoside IV(2)-alpha-Fuc-nLc4Cer(d18:1(4E)) + GDP + H(+). The catalysed reaction is a ganglioside GM1 + GDP-beta-L-fucose = a ganglioside Fuc-GM1 + GDP + H(+). It catalyses the reaction beta-D-galactosyl-(1-&gt;3)-N-acetyl-D-galactosamine + GDP-beta-L-fucose = alpha-L-fucosyl-(1-&gt;2)-beta-D-galactosyl-(1-&gt;3)-N-acetyl-D-galactosamine + GDP + H(+). It functions in the pathway protein modification; protein glycosylation. In terms of biological role, catalyzes the transfer of L-fucose, from a guanosine diphosphate-beta-L-fucose, to the terminal galactose residue of glycoconjugates through an alpha(1,2) linkage leading to H antigen synthesis that is an intermediate substrate in the synthesis of ABO blood group antigens. H antigen is essential for maturation of the glomerular layer of the main olfactory bulb, in cell migration and early cell-cell contacts during tumor associated angiogenesis. Preferentially fucosylates soluble lactose and to a lesser extent fucosylates glycolipids gangliosides GA1 and GM1a. The polypeptide is Galactoside alpha-(1,2)-fucosyltransferase 1 (Lagothrix lagotricha (Brown woolly monkey)).